The primary structure comprises 654 residues: Endoplasmic reticulum chaperone BiP (654 aa).

Positions 1–18 are cleaved as a signal peptide; the sequence is MKLSLVAAVLLLLCAARA. Residues 1 to 80 form a required for interaction with ELAPOR1 region; the sequence is MKLSLVAAVL…EGERLIGDAA (80 aa). Position 36 to 39 (36 to 39) interacts with ATP; it reads GTTY. Position 86 is a phosphoserine (serine 86). Lysine 96 serves as a coordination point for ATP. Lysine 125 is subject to N6-acetyllysine. The tract at residues 125 to 280 is nucleotide-binding (NBD); it reads KPYIQVDIGG…KKKTGKDVRK (156 aa). A 3'-nitrotyrosine modification is found at tyrosine 160. Position 213 is an N6-acetyllysine (lysine 213). Residue 227–229 coordinates ATP; the sequence is GGT. The residue at position 271 (lysine 271) is an N6-acetyllysine. Residue 293 to 300 coordinates ATP; sequence EKAKRALS. At lysine 326 the chain carries N6-acetyllysine. A Glycyl lysine isopeptide (Lys-Gly) (interchain with G-Cter in SUMO2) cross-link involves residue lysine 352. Lysine 353 carries the N6-acetyllysine; alternate modification. Residue lysine 353 forms a Glycyl lysine isopeptide (Lys-Gly) (interchain with G-Cter in SUMO1); alternate linkage. 364-367 provides a ligand contact to ATP; that stretch reads GSTR. Residues 409–419 are interdomain linker; the sequence is QDTGDLVLLDV. Residues 420 to 500 are substrate-binding (SBD); it reads CPLTLGIETV…PRGVPQIEVT (81 aa). An N6-succinyllysine modification is found at lysine 447. Residue arginine 492 is modified to Omega-N-methylarginine. The residue at position 518 (threonine 518) is an O-AMP-threonine; alternate. Threonine 518 carries the post-translational modification Phosphothreonine; alternate. Lysine 585 is modified (N6,N6,N6-trimethyllysine; by METTL21A; in vitro). An N6,N6-dimethyllysine; alternate modification is found at lysine 585. Position 585 is an N6-methyllysine; alternate (lysine 585). At lysine 591 the chain carries N6-methyllysine. The segment at 632–654 is disordered; that stretch reads SKLYGSAGPPPTGEEDTSERDEL. Phosphothreonine occurs at positions 643 and 648. Acidic residues predominate over residues 644-654; that stretch reads GEEDTSERDEL. Phosphoserine is present on serine 649. Positions 651 to 654 match the Prevents secretion from ER motif; sequence RDEL.

This sequence belongs to the heat shock protein 70 family. In terms of assembly, monomer and homooligomer; homooligomerization via the interdomain linker inactivates the chaperone activity and acts as a storage of HSPA5/BiP molecules. Interacts with DNAJC1 (via J domain). Component of an EIF2 complex at least composed of CELF1/CUGBP1, CALR, CALR3, EIF2S1, EIF2S2, HSP90B1 and HSPA5. Part of a large chaperone multiprotein complex comprising DNAJB11, HSP90B1, HSPA5, HYOU, PDIA2, PDIA4, PDIA6, PPIB, SDF2L1, UGGT1 and very small amounts of ERP29, but not, or at very low levels, CALR nor CANX. Interacts with TMEM132A and TRIM21. May form a complex with ERLEC1, OS9, SEL1L and SYVN1. Interacts with DNAJC10. Interacts with DNAJB9/ERdj4; leading to recruit HSPA5/BiP to ERN1/IRE1. Interacts with ERN1/IRE1 (via luminal domain); the interaction takes place following interaction with DNAJB9/ERdj4 and leads to inactivate ERN1/IRE1, the interaction also competitively inhibits ERN1 interaction with MANF. Interacts directly with MANF (via SAP domain); the interaction inhibits ATP binding to HSPA5/BiP and subsequent nucleotide exchange. Interacts with EIF2AK3/PERK (via luminal domain); interaction leads to inactivate EIF2AK3/PERK. Interacts with MX1. Interacts with METTL23. Interacts with CEMIP; the interaction induces calcium leakage from the endoplasmic reticulum and cell migration. Interacts with PCSK4 form; the interaction takes place in the endoplasmic reticulum. Interacts with CIPC. Interacts with CCDC88B (via C-terminus); the interaction opposes ERN1-mediated JNK activation, protecting against apoptosis. Interacts with INPP5K; necessary for INPP5K localization at the endoplasmic reticulum. Interacts with MANF; the interaction is direct. Interacts with LOXL2; leading to activate the ERN1/IRE1-XBP1 pathway of the unfolded protein response. Interacts with CLU under stressed condition; interaction increases CLU protein stability; facilitates its retrotranslocation and redistribution to the mitochondria; cooperatively suppress stress-induced apoptosis by stabilizing mitochondrial membrane integrity. Interacts with CCDC47. Interacts with CLN3. Interacts with ELAPOR1; may regulate the function of HSPA5 in apoptosis and cell proliferation. Interacts with CASP7. Interacts with ILDR2; the interaction stabilizes ILDR2 expression. Interacts with ADAM7. Post-translationally, in unstressed cells, AMPylation at Thr-518 by FICD inactivates the chaperome activity: AMPylated form is locked in a relatively inert state and only weakly stimulated by J domain-containing proteins. In response to endoplasmic reticulum stress, de-AMPylation by the same protein, FICD, restores the chaperone activity.

Its subcellular location is the endoplasmic reticulum lumen. The protein resides in the melanosome. It localises to the cytoplasm. The protein localises to the cell surface. The catalysed reaction is ATP + H2O = ADP + phosphate + H(+). With respect to regulation, the chaperone activity is regulated by ATP-induced allosteric coupling of the nucleotide-binding (NBD) and substrate-binding (SBD) domains. In the ADP-bound and nucleotide-free (apo) states, the two domains have little interaction. In contrast, in the ATP-bound state the two domains are tightly coupled, which results in drastically accelerated kinetics in both binding and release of polypeptide substrates. J domain-containing co-chaperones (DNAJB9/ERdj4 or DNAJC10/ERdj5) stimulate the ATPase activity and are required for efficient substrate recognition by HSPA5/BiP. Homooligomerization inactivates participating HSPA5/BiP protomers and probably act as reservoirs to store HSPA5/BiP molecules when they are not needed by the cell. Functionally, endoplasmic reticulum chaperone that plays a key role in protein folding and quality control in the endoplasmic reticulum lumen. Involved in the correct folding of proteins and degradation of misfolded proteins via its interaction with DNAJC10/ERdj5, probably to facilitate the release of DNAJC10/ERdj5 from its substrate. Acts as a key repressor of the EIF2AK3/PERK and ERN1/IRE1-mediated unfolded protein response (UPR). In the unstressed endoplasmic reticulum, recruited by DNAJB9/ERdj4 to the luminal region of ERN1/IRE1, leading to disrupt the dimerization of ERN1/IRE1, thereby inactivating ERN1/IRE1. Also binds and inactivates EIF2AK3/PERK in unstressed cells. Accumulation of misfolded protein in the endoplasmic reticulum causes release of HSPA5/BiP from ERN1/IRE1 and EIF2AK3/PERK, allowing their homodimerization and subsequent activation. Plays an auxiliary role in post-translational transport of small presecretory proteins across endoplasmic reticulum (ER). May function as an allosteric modulator for SEC61 channel-forming translocon complex, likely cooperating with SEC62 to enable the productive insertion of these precursors into SEC61 channel. Appears to specifically regulate translocation of precursors having inhibitory residues in their mature region that weaken channel gating. May also play a role in apoptosis and cell proliferation. This is Endoplasmic reticulum chaperone BiP from Ictidomys tridecemlineatus (Thirteen-lined ground squirrel).